The sequence spans 219 residues: Ribosomal RNA small subunit methyltransferase Nep1 (219 aa).

S-adenosyl-L-methionine contacts are provided by residues Gly-178, Gly-183, and 196–201 (LYKAPL).

The protein belongs to the class IV-like SAM-binding methyltransferase superfamily. RNA methyltransferase NEP1 family. Homodimer.

It carries out the reaction a pseudouridine in rRNA + S-adenosyl-L-methionine = an N(1)-methylpseudouridine in rRNA + S-adenosyl-L-homocysteine + H(+). In terms of biological role, methyltransferase involved in ribosomal biogenesis. Specifically catalyzes the N1-methylation of the pseudouridine corresponding to position 914 in M.jannaschii 16S rRNA. The sequence is that of Ribosomal RNA small subunit methyltransferase Nep1 from Thermococcus onnurineus (strain NA1).